The following is a 355-amino-acid chain: uncharacterized protein (355 aa).

Residues M1–G22 form the signal peptide.

This sequence belongs to the bacterial solute-binding protein 1 family. WtpA subfamily.

This is an uncharacterized protein from Methanoculleus marisnigri (strain ATCC 35101 / DSM 1498 / JR1).